Here is a 373-residue protein sequence, read N- to C-terminus: ADP-forming sulfoacetate-CoA ligase subunit SauC (373 aa).

The ATP-grasp domain occupies 9-249; sequence KEAFREKGLP…YLQFNGDIAL (241 aa). An ATP-binding site is contributed by 35 to 97; that stretch reads FAEVGFPCVL…EEAVDIDREI (63 aa). Mg(2+) is bound by residues E186 and N188.

The protein belongs to the succinate/malate CoA ligase beta subunit family. In terms of assembly, forms a complex with SauD. It depends on Mg(2+) as a cofactor.

The catalysed reaction is sulfoacetate + ATP + CoA = sulfoacetyl-CoA + ADP + phosphate. Involved in the degradation of sulfoacetate. Catalyzes the CoA- and ATP-dependent conversion of sulfoacetate to sulfoacetyl-CoA and ADP. Cannot use other sulfonic and carboxylic acids, and shows only residual activity with 3-sulfopropanoate and malonic acid. The sequence is that of ADP-forming sulfoacetate-CoA ligase subunit SauC from Bilophila wadsworthia (strain 3_1_6).